The primary structure comprises 357 residues: Trans-acting factor B (357 aa).

Residues 226 to 257 (DDNDLEEEERNASGEQTTTAREESEALDTTSN) are disordered.

Functionally, plasmid partition require REP1, REP2, and a cis-acting DNA sequence (known as STB). REP1 may act by intercalating in the yeast nuclear matrix and binding STB either directly or via REP2. This chain is Trans-acting factor B (B), found in Zygosaccharomyces bailii.